The chain runs to 193 residues: UPF0215 protein PH0071 (193 aa).

The protein belongs to the UPF0215 family.

This is UPF0215 protein PH0071 from Pyrococcus horikoshii (strain ATCC 700860 / DSM 12428 / JCM 9974 / NBRC 100139 / OT-3).